Here is a 411-residue protein sequence, read N- to C-terminus: 6-hydroxytryprostatin B O-methyltransferase (411 aa).

Asp-270 contacts S-adenosyl-L-methionine. His-313 acts as the Proton acceptor in catalysis.

It belongs to the class I-like SAM-binding methyltransferase superfamily. Cation-independent O-methyltransferase family. Homodimer.

The catalysed reaction is 6-hydroxytryprostatin B + S-adenosyl-L-methionine = tryprostatin A + S-adenosyl-L-homocysteine + H(+). It functions in the pathway alkaloid biosynthesis. Its function is as follows. 6-hydroxytryprostatin B O-methyltransferase; part of the gene cluster that mediates the biosynthesis of fumitremorgins, indole alkaloids that carry not only intriguing chemical structures, but also interesting biological and pharmacological activities. The biosynthesis of fumitremorgin-type alkaloids begins by condensation of the two amino acids L-tryptophan and L-proline to brevianamide F, catalyzed by the non-ribosomal peptide synthetase ftmPS/ftmA. Brevianamide F is then prenylated by the prenyltransferase ftmPT1/ftmB in the presence of dimethylallyl diphosphate, resulting in the formation of tryprostatin B. The three cytochrome P450 monooxygenases, ftmP450-1/ftmC, ftmP450-2/ftmE and ftmP450-3/FtmG, are responsible for the conversion of tryprostatin B to 6-hydroxytryprostatin B, tryprostatin A to fumitremorgin C and fumitremorgin C to 12,13-dihydroxyfumitremorgin C, respectively. The putative methyltransferase ftmMT/ftmD is expected for the conversion of 6-hydroxytryprostatin B to tryprostatin A. FtmPT2/FtmH catalyzes the prenylation of 12,13-dihydroxyfumitre-morgin C in the presence of dimethylallyl diphosphate, resulting in the formation of fumitremorgin B. Fumitremorgin B is further converted to verruculogen by ftmOx1/ftmF via the insertion of an endoperoxide bond between the two prenyl moieties. Finally, verruculogen is further converted to fumitremorgin A by the verruculogen prenyltransferase ftmPT3. The chain is 6-hydroxytryprostatin B O-methyltransferase from Neosartorya fischeri (strain ATCC 1020 / DSM 3700 / CBS 544.65 / FGSC A1164 / JCM 1740 / NRRL 181 / WB 181) (Aspergillus fischerianus).